Here is a 113-residue protein sequence, read N- to C-terminus: uncharacterized protein (113 aa).

This is an uncharacterized protein from Listeria innocua serovar 6a (strain ATCC BAA-680 / CLIP 11262).